Consider the following 126-residue polypeptide: Small ribosomal subunit protein uS12 (126 aa).

The tract at residues 1–29 (MPTIQQLIRQPRAPKKRRSKSPALQKCPQ) is disordered. A 3-methylthioaspartic acid modification is found at D89.

This sequence belongs to the universal ribosomal protein uS12 family. As to quaternary structure, part of the 30S ribosomal subunit. Contacts proteins S8 and S17. May interact with IF1 in the 30S initiation complex.

In terms of biological role, with S4 and S5 plays an important role in translational accuracy. Interacts with and stabilizes bases of the 16S rRNA that are involved in tRNA selection in the A site and with the mRNA backbone. Located at the interface of the 30S and 50S subunits, it traverses the body of the 30S subunit contacting proteins on the other side and probably holding the rRNA structure together. The combined cluster of proteins S8, S12 and S17 appears to hold together the shoulder and platform of the 30S subunit. The protein is Small ribosomal subunit protein uS12 of Protochlamydia amoebophila (strain UWE25).